The sequence spans 150 residues: D-aminoacyl-tRNA deacylase (150 aa).

A Gly-cisPro motif, important for rejection of L-amino acids motif is present at residues 138 to 139; the sequence is GP.

This sequence belongs to the DTD family. In terms of assembly, homodimer.

Its subcellular location is the cytoplasm. The enzyme catalyses glycyl-tRNA(Ala) + H2O = tRNA(Ala) + glycine + H(+). It catalyses the reaction a D-aminoacyl-tRNA + H2O = a tRNA + a D-alpha-amino acid + H(+). Functionally, an aminoacyl-tRNA editing enzyme that deacylates mischarged D-aminoacyl-tRNAs. Also deacylates mischarged glycyl-tRNA(Ala), protecting cells against glycine mischarging by AlaRS. Acts via tRNA-based rather than protein-based catalysis; rejects L-amino acids rather than detecting D-amino acids in the active site. By recycling D-aminoacyl-tRNA to D-amino acids and free tRNA molecules, this enzyme counteracts the toxicity associated with the formation of D-aminoacyl-tRNA entities in vivo and helps enforce protein L-homochirality. The chain is D-aminoacyl-tRNA deacylase from Chromobacterium violaceum (strain ATCC 12472 / DSM 30191 / JCM 1249 / CCUG 213 / NBRC 12614 / NCIMB 9131 / NCTC 9757 / MK).